We begin with the raw amino-acid sequence, 419 residues long: 3-isopropylmalate dehydratase large subunit (419 aa).

Positions 301, 361, and 364 each coordinate [4Fe-4S] cluster.

It belongs to the aconitase/IPM isomerase family. LeuC type 2 subfamily. In terms of assembly, heterodimer of LeuC and LeuD. It depends on [4Fe-4S] cluster as a cofactor.

The catalysed reaction is (2R,3S)-3-isopropylmalate = (2S)-2-isopropylmalate. Its pathway is amino-acid biosynthesis; L-leucine biosynthesis; L-leucine from 3-methyl-2-oxobutanoate: step 2/4. Functionally, catalyzes the isomerization between 2-isopropylmalate and 3-isopropylmalate, via the formation of 2-isopropylmaleate. The polypeptide is 3-isopropylmalate dehydratase large subunit (Campylobacter hominis (strain ATCC BAA-381 / DSM 21671 / CCUG 45161 / LMG 19568 / NCTC 13146 / CH001A)).